A 368-amino-acid polypeptide reads, in one-letter code: Nuclease EXOG, mitochondrial (368 aa).

A mitochondrion-targeting transit peptide spans 1-41 (MAIKSIASRLRGSRRFLSGFVAGAVVGAAGAGLAALQFFRS). His-140 (proton acceptor) is an active-site residue. Position 171 (Asn-171) interacts with a divalent metal cation.

Belongs to the DNA/RNA non-specific endonuclease family. In terms of assembly, homodimer. The cofactor is a divalent metal cation. As to expression, ubiquitous.

It is found in the mitochondrion inner membrane. Its function is as follows. Endo/exonuclease with nicking activity towards supercoiled DNA, a preference for single-stranded DNA and 5'-3' exonuclease activity. The polypeptide is Nuclease EXOG, mitochondrial (EXOG) (Homo sapiens (Human)).